Here is a 281-residue protein sequence, read N- to C-terminus: Merozoite surface protein 2 (281 aa).

A signal peptide spans 1–20; that stretch reads MKVIKTLSIINFFIFVTFNI. N-linked (GlcNAc...) asparagine glycans are attached at residues asparagine 22 and asparagine 36. The disordered stretch occupies residues 42–242; it reads SMEESNPPTG…DSQKECTDGN (201 aa). A polymorphic region region spans residues 44 to 207; that stretch reads EESNPPTGAS…EQTESPELQS (164 aa). 3 repeat units span residues 51–58, 59–66, and 67–74. The tract at residues 51 to 74 is 3 X 8 AA tandem repeats of G-A-S-G-R-A-G-A; sequence GASGRAGAGASGRAGAGASGRAGA. Residues 54–76 show a composition bias toward gly residues; sequence GRAGAGASGRAGAGASGRAGAGA. The segment covering 77 to 133 has biased composition (low complexity); it reads GAVASAGSGDGAVASAGNGANPGADAKRSTSTPATTTTTTTTNDAEASTSTSSENPN. Polar residues-rich tracts occupy residues 150–174 and 181–209; these read NKANTETQNNSNVQQDSQTKSNVPP and KSPTAQPEQAENSAPTAEQTESPELQSAP. Asparagine 158 carries N-linked (GlcNAc...) asparagine glycosylation. The N-linked (GlcNAc...) asparagine glycan is linked to asparagine 230. Cysteine 238 and cysteine 246 are oxidised to a cystine. Asparagine 254 and asparagine 255 each carry an N-linked (GlcNAc...) asparagine glycan. Asparagine 255 carries GPI-anchor amidated asparagine lipidation. Positions 256–281 are cleaved as a propeptide — removed in mature form; the sequence is SSNIASINKFVVLISATLVLSFAIFI.

It is found in the cell membrane. Its function is as follows. May play a role in the merozoite attachment to the erythrocyte. The protein is Merozoite surface protein 2 of Plasmodium falciparum (isolate thtn / Thailand).